The following is a 382-amino-acid chain: Lipid-A-disaccharide synthase (382 aa).

This sequence belongs to the LpxB family.

The catalysed reaction is 2-N,3-O-bis[(3R)-3-hydroxytetradecanoyl]-alpha-D-glucosaminyl 1-phosphate + UDP-2-N,3-O-bis[(3R)-3-hydroxytetradecanoyl]-alpha-D-glucosamine = lipid A disaccharide (E. coli) + UDP + H(+). The enzyme catalyses a lipid X + a UDP-2-N,3-O-bis[(3R)-3-hydroxyacyl]-alpha-D-glucosamine = a lipid A disaccharide + UDP + H(+). It participates in glycolipid biosynthesis; lipid IV(A) biosynthesis; lipid IV(A) from (3R)-3-hydroxytetradecanoyl-[acyl-carrier-protein] and UDP-N-acetyl-alpha-D-glucosamine: step 5/6. Functionally, condensation of UDP-2,3-diacylglucosamine and 2,3-diacylglucosamine-1-phosphate to form lipid A disaccharide, a precursor of lipid A, a phosphorylated glycolipid that anchors the lipopolysaccharide to the outer membrane of the cell. In Enterobacter sp. (strain 638), this protein is Lipid-A-disaccharide synthase.